The following is a 761-amino-acid chain: RNA-binding protein mde7 (761 aa).

3 stretches are compositionally biased toward polar residues: residues 31–46 (PNHS…NSLL), 58–83 (SRNS…TTPF), and 99–110 (SRNNSYLQGTAE). Disordered stretches follow at residues 31–110 (PNHS…GTAE) and 188–213 (HYFD…EASN). Basic and acidic residues predominate over residues 188-197 (HYFDDTDKSV). Residues 199–211 (SKSSSGSNSLSEA) show a composition bias toward low complexity. Residues 223–289 (IVGGLPDDFD…SSTNNFTIIQ (67 aa)) enclose the RRM 1 domain. Residues 442 to 466 (ESNSLSNQPNNFAQTSFDYQPNHPN) show a composition bias toward polar residues. A disordered region spans residues 442–468 (ESNSLSNQPNNFAQTSFDYQPNHPNAI). Positions 602-679 (NTIYVGNLSN…GGIRLSYSKN (78 aa)) constitute an RRM 2 domain.

The protein is RNA-binding protein mde7 (mde7) of Schizosaccharomyces pombe (strain 972 / ATCC 24843) (Fission yeast).